Here is a 585-residue protein sequence, read N- to C-terminus: Formate--tetrahydrofolate ligase (585 aa).

Thr-65–Thr-72 lines the ATP pocket.

Belongs to the formate--tetrahydrofolate ligase family.

It catalyses the reaction (6S)-5,6,7,8-tetrahydrofolate + formate + ATP = (6R)-10-formyltetrahydrofolate + ADP + phosphate. The protein operates within one-carbon metabolism; tetrahydrofolate interconversion. The protein is Formate--tetrahydrofolate ligase of Shewanella baltica (strain OS155 / ATCC BAA-1091).